The sequence spans 47 residues: Large ribosomal subunit protein bL34 (47 aa).

Positions 1 to 47 (MVTEGLKPHISIKKKKRKSGFLARMRTKSGRKIIARRRRKGRKRLAP) are disordered. Positions 10–47 (ISIKKKKRKSGFLARMRTKSGRKIIARRRRKGRKRLAP) are enriched in basic residues.

It belongs to the bacterial ribosomal protein bL34 family.

The chain is Large ribosomal subunit protein bL34 (rpmH) from Aquifex aeolicus (strain VF5).